The sequence spans 242 residues: UPF0309 protein BSUIS_B0903 (242 aa).

One can recognise an SIS domain in the interval 30–214; that stretch reads AADLIAAAAR…ARLVGEGDAP (185 aa).

This sequence belongs to the UPF0309 family.

The sequence is that of UPF0309 protein BSUIS_B0903 from Brucella suis (strain ATCC 23445 / NCTC 10510).